We begin with the raw amino-acid sequence, 386 residues long: Terpene cyclase 6 (386 aa).

Mg(2+)-binding residues include Asp128, Asn276, and Ser280. Residues Asp128–Asp132 carry the D(D/E)XX(D/E) motif motif. The NSE motif motif lies at Asn276 to Glu284. Positions Trp360–Tyr367 match the WxxxxxRY motif motif. (2E,6E)-farnesyl diphosphate is bound by residues Arg366 and Tyr367.

Belongs to the terpene synthase family. In terms of assembly, homodimer. Mg(2+) is required as a cofactor.

The catalysed reaction is (2E,6E)-farnesyl diphosphate + H2O = trichobrasilenol + diphosphate. The enzyme catalyses (2E,6E)-farnesyl diphosphate = alpha-humulene + diphosphate. It catalyses the reaction (2E,6E)-farnesyl diphosphate = (-)-(E)-beta-caryophyllene + diphosphate. It carries out the reaction (2E,6E)-farnesyl diphosphate = (E)-2-epi-beta-caryophyllene + diphosphate. The catalysed reaction is (2E,6E)-farnesyl diphosphate + H2O = (+)-isoafricanol + diphosphate. The enzyme catalyses (2E,6E)-farnesyl diphosphate + H2O = (+)-(2S,3R,9R)-pristinol + diphosphate. It catalyses the reaction (2E,6E)-farnesyl diphosphate = african-3-ene + diphosphate. It carries out the reaction (2E,6E)-farnesyl diphosphate = african-1-ene + diphosphate. The protein operates within sesquiterpene biosynthesis. Terpene cyclase that is able to convert FPP into a mixture of sesquiterpene hydrocarbons and alcohols. The main product is trichobrasilenol. Additionally, side products include alpha-humulene, caryophyllene, 2-epi-caryophyllene, african-3-ene, african-1-ene, isoafricanol and pristinol. Does not accept GPP, GGPP, and GFPP as substrates. The polypeptide is Terpene cyclase 6 (Hypocrea atroviridis (Trichoderma atroviride)).